The chain runs to 910 residues: Harmonin (910 aa).

Positions Met-1–Lys-86 are N-terminal domain. PDZ domains follow at residues Glu-87 to Pro-171 and Lys-211 to Glu-295. The interval Gly-194–Ile-833 is mediates interaction with MYO7B. Ser-219 carries the phosphoserine modification. Coiled coils occupy residues Thr-299 to Asp-377 and Thr-417 to Glu-482. Residues Val-563–Ile-688 form a disordered region. Residues Met-564 to Leu-582 are compositionally biased toward pro residues. The span at Pro-583–Val-596 shows a compositional bias: low complexity. The segment covering Thr-599–Ile-611 has biased composition (pro residues). A compositionally biased stretch (polar residues) spans Asn-650–Arg-664. The region spanning Asp-752–Val-839 is the PDZ 3 domain. Residues Lys-890–Pro-910 are disordered. Low complexity predominate over residues Pro-899–Pro-910.

In terms of assembly, part of the IMAC/intermicrovillar adhesion complex/intermicrovillar tip-link complex composed of ANKS4B, MYO7B, USH1C, CDHR2 and CDHR5. Part of a complex composed of USH1C, USH1G and MYO7A. Interacts with F-actin. Interacts with USH2A. Interacts with SLC4A7. Interacts (via PDZ1 domain) with the C-terminus of USHBP1. Interacts (via N-terminus and PDZ 2 domain) with CDH23. Interacts with USH1G. Interacts with MYO7B. Interacts with CDHR2 and CDHR5; may mediate their interaction with MYO7B at the microvilli tip. Interacts (via PDZ 1 domain) with ANKS4B. Interacts (via PDZ 1 domain) with DOCK4. In terms of tissue distribution, detected in stereocilia of cochlear hair cells (at protein level). Isoform 1 is expressed in the eye, cochlea, vestibule, heart, kidney, small intestine and testis; it is barely visible in skeletal muscle, liver, and lung and is absent from the brain. Isoforms 2 and 3 are expressed in the cochlea and vestibule.

It localises to the cytoplasm. The protein resides in the cytosol. The protein localises to the cytoskeleton. It is found in the cell projection. Its subcellular location is the microvillus. Functionally, anchoring/scaffolding protein that is a part of the functional network formed by USH1C, USH1G, CDH23 and MYO7A that mediates mechanotransduction in cochlear hair cells. Required for normal development and maintenance of cochlear hair cell bundles. As part of the intermicrovillar adhesion complex/IMAC plays a role in brush border differentiation, controlling microvilli organization and length. Probably plays a central regulatory role in the assembly of the complex, recruiting CDHR2, CDHR5 and MYO7B to the microvilli tips. This chain is Harmonin (Ush1c), found in Mus musculus (Mouse).